Here is a 298-residue protein sequence, read N- to C-terminus: Putative olfactory receptor 10D4 (298 aa).

Residues 1 to 23 lie on the Extracellular side of the membrane; the sequence is MRNHTMVTEFILLGIPETEGLET. N-linked (GlcNAc...) asparagine glycosylation occurs at asparagine 3. The chain crosses the membrane as a helical span at residues 24 to 44; the sequence is ALLFLFSSFYLCTLLGNVLIL. Residues 45–52 lie on the Cytoplasmic side of the membrane; the sequence is TAIISSTR. A helical membrane pass occupies residues 53-73; that stretch reads LHTPMYFFLGNLSIFDLGFSS. Over 74 to 97 the chain is Extracellular; sequence TTVPKMLFYLSGNSHAISYAGCVS. Cysteine 95 and cysteine 187 form a disulfide bridge. Residues 98–118 traverse the membrane as a helical segment; it reads QLFFYHFLGCTECFLYTVMAC. Topologically, residues 119–137 are cytoplasmic; it reads DRFVAICFPLRYTVIMNHR. A helical membrane pass occupies residues 138 to 158; sequence VCFMLATGTWMIGCVHAMILT. Residues 159-195 are Extracellular-facing; the sequence is PLTFQLPYCGPNKVGYYFCDIPAVLPLACKDTSLAQR. Residues 196–215 traverse the membrane as a helical segment; sequence VGFTNVGLLSLICFFLILVS. The Cytoplasmic segment spans residues 216 to 235; sequence YTCIGISISKIRSAEGRQRA. Residues 236–256 traverse the membrane as a helical segment; the sequence is FSTCSAHLTAILCAYGPVIVI. Topologically, residues 257-267 are extracellular; it reads YLQPNPSALLG. The chain crosses the membrane as a helical span at residues 268-288; it reads SIIQILNNLVTPMLNPLIYSL. Residues 289–298 lie on the Cytoplasmic side of the membrane; that stretch reads RNKDVKSDQP.

The protein belongs to the G-protein coupled receptor 1 family.

It localises to the cell membrane. Its function is as follows. Odorant receptor. The protein is Putative olfactory receptor 10D4 (OR10D4P) of Homo sapiens (Human).